The sequence spans 577 residues: Protein NUCLEOLAR COMPLEX ASSOCIATED 4 (577 aa).

A disordered region spans residues 230 to 263; it reads PEKQAEKSQHEMWSGSDESISEKPTDKKKKTEKG. Helical transmembrane passes span 329-349, 350-370, and 404-424; these read IGGV…TQHG, LEYP…VFVA, and LSLS…YNLL.

This sequence belongs to the CBF/MAK21 family. Component of the ribosomal small subunit (SSU) processome composed of at least 40 protein subunits and snoRNA U3. Mostly expressed in flowers and stems and at lower levels in roots, hypocotyls, siliques, leaves and seeds.

It localises to the nucleus membrane. Its subcellular location is the nucleus. The protein resides in the nucleolus. Its function is as follows. Essential protein required during embryogenesis. Involved in nucleolar processing of ribosomal RNA (rRNA) 40S and 90S ribosomal subunits and ribosome assembly; early in ribosome biogenesis, especially required during the maturation of 5.8S rRNA. Has a role in the nuclear export of 40S pre-ribosomal subunit to the cytoplasm. This chain is Protein NUCLEOLAR COMPLEX ASSOCIATED 4, found in Arabidopsis thaliana (Mouse-ear cress).